A 309-amino-acid polypeptide reads, in one-letter code: Aspartate carbamoyltransferase catalytic subunit (309 aa).

Carbamoyl phosphate contacts are provided by Arg-58 and Thr-59. L-aspartate is bound at residue Lys-87. Residues Arg-108, His-136, and Gln-139 each coordinate carbamoyl phosphate. Residues Arg-168 and Arg-229 each contribute to the L-aspartate site. 2 residues coordinate carbamoyl phosphate: Leu-268 and Pro-269.

The protein belongs to the aspartate/ornithine carbamoyltransferase superfamily. ATCase family. As to quaternary structure, heterooligomer of catalytic and regulatory chains.

It catalyses the reaction carbamoyl phosphate + L-aspartate = N-carbamoyl-L-aspartate + phosphate + H(+). It functions in the pathway pyrimidine metabolism; UMP biosynthesis via de novo pathway; (S)-dihydroorotate from bicarbonate: step 2/3. Catalyzes the condensation of carbamoyl phosphate and aspartate to form carbamoyl aspartate and inorganic phosphate, the committed step in the de novo pyrimidine nucleotide biosynthesis pathway. The sequence is that of Aspartate carbamoyltransferase catalytic subunit from Methanosarcina mazei (strain ATCC BAA-159 / DSM 3647 / Goe1 / Go1 / JCM 11833 / OCM 88) (Methanosarcina frisia).